The following is a 347-amino-acid chain: GMP reductase (347 aa).

Residue 108-131 (ADFQKTKDIMALTEDLIFICIDIA) participates in NADP(+) binding. K(+) is bound by residues glycine 181 and glycine 183. Cysteine 186 acts as the Thioimidate intermediate in catalysis. Residue 216–239 (IIGDGGCSCAGDVSKAFGGGADFV) coordinates NADP(+).

It belongs to the IMPDH/GMPR family. GuaC type 1 subfamily. As to quaternary structure, homotetramer.

It carries out the reaction IMP + NH4(+) + NADP(+) = GMP + NADPH + 2 H(+). In terms of biological role, catalyzes the irreversible NADPH-dependent deamination of GMP to IMP. It functions in the conversion of nucleobase, nucleoside and nucleotide derivatives of G to A nucleotides, and in maintaining the intracellular balance of A and G nucleotides. The sequence is that of GMP reductase from Photobacterium profundum (strain SS9).